We begin with the raw amino-acid sequence, 229 residues long: Orotidine 5'-phosphate decarboxylase (229 aa).

Substrate is bound by residues aspartate 12, lysine 34, 61 to 70 (DWKLHDIGAT), threonine 116, arginine 177, glutamine 186, glycine 206, and arginine 207. The active-site Proton donor is lysine 63.

It belongs to the OMP decarboxylase family. Type 1 subfamily. In terms of assembly, homodimer.

It carries out the reaction orotidine 5'-phosphate + H(+) = UMP + CO2. It participates in pyrimidine metabolism; UMP biosynthesis via de novo pathway; UMP from orotate: step 2/2. Its function is as follows. Catalyzes the decarboxylation of orotidine 5'-monophosphate (OMP) to uridine 5'-monophosphate (UMP). The chain is Orotidine 5'-phosphate decarboxylase from Caulobacter sp. (strain K31).